Reading from the N-terminus, the 612-residue chain is UvrABC system protein C (612 aa).

Positions 20–98 constitute a GIY-YIG domain; it reads THSGVYRMLD…IKQHRPKYNI (79 aa). Residues 208–243 form the UVR domain; sequence STVLEEISAKMYQASEDMEYEKAQVYRDQLVVLRKL.

This sequence belongs to the UvrC family. As to quaternary structure, interacts with UvrB in an incision complex.

The protein resides in the cytoplasm. Its function is as follows. The UvrABC repair system catalyzes the recognition and processing of DNA lesions. UvrC both incises the 5' and 3' sides of the lesion. The N-terminal half is responsible for the 3' incision and the C-terminal half is responsible for the 5' incision. The chain is UvrABC system protein C from Francisella tularensis subsp. novicida (strain U112).